Consider the following 354-residue polypeptide: Inactive ADP-ribosyltransferase ARH2 (354 aa).

A Phosphoserine modification is found at S27.

This sequence belongs to the ADP-ribosylglycohydrolase family.

It localises to the cytoplasm. It is found in the myofibril. The protein resides in the sarcomere. Its function is as follows. Required for myofibril assembly and outgrowth of the cardiac chambers in the developing heart. Appears to be catalytically inactive, showing no activity against O-acetyl-ADP-ribose. This is Inactive ADP-ribosyltransferase ARH2 (ADPRHL1) from Pongo abelii (Sumatran orangutan).